We begin with the raw amino-acid sequence, 447 residues long: ATP-dependent protease ATPase subunit HslU (447 aa).

ATP is bound by residues I18, 60–65, D259, E325, and R397; that span reads GVGKTE.

Belongs to the ClpX chaperone family. HslU subfamily. A double ring-shaped homohexamer of HslV is capped on each side by a ring-shaped HslU homohexamer. The assembly of the HslU/HslV complex is dependent on binding of ATP.

It is found in the cytoplasm. In terms of biological role, ATPase subunit of a proteasome-like degradation complex; this subunit has chaperone activity. The binding of ATP and its subsequent hydrolysis by HslU are essential for unfolding of protein substrates subsequently hydrolyzed by HslV. HslU recognizes the N-terminal part of its protein substrates and unfolds these before they are guided to HslV for hydrolysis. The chain is ATP-dependent protease ATPase subunit HslU from Burkholderia thailandensis (strain ATCC 700388 / DSM 13276 / CCUG 48851 / CIP 106301 / E264).